We begin with the raw amino-acid sequence, 160 residues long: 3-hydroxyacyl-[acyl-carrier-protein] dehydratase FabZ (160 aa).

Residue His59 is part of the active site.

The protein belongs to the thioester dehydratase family. FabZ subfamily.

The protein resides in the cytoplasm. The catalysed reaction is a (3R)-hydroxyacyl-[ACP] = a (2E)-enoyl-[ACP] + H2O. Involved in unsaturated fatty acids biosynthesis. Catalyzes the dehydration of short chain beta-hydroxyacyl-ACPs and long chain saturated and unsaturated beta-hydroxyacyl-ACPs. The protein is 3-hydroxyacyl-[acyl-carrier-protein] dehydratase FabZ of Burkholderia thailandensis (strain ATCC 700388 / DSM 13276 / CCUG 48851 / CIP 106301 / E264).